The primary structure comprises 207 residues: Glutathione S-transferase P (207 aa).

Positions 1 to 78 (PPYTITYFPV…HLGRSFGLYG (78 aa)) constitute a GST N-terminal domain. The residue at position 3 (Tyr-3) is a Phosphotyrosine; by EGFR. Glutathione contacts are provided by residues Tyr-7, Arg-13, Trp-38, Lys-42, and 49–50 (QL). The residue at position 59 (Thr-59) is a Phosphothreonine. 62–63 (QS) is a binding site for glutathione. Positions 80-201 (DQKEAALVDM…ASPEHVNRPI (122 aa)) constitute a GST C-terminal domain. N6-succinyllysine occurs at positions 100 and 113. Position 125 is an N6-acetyllysine (Lys-125).

The protein belongs to the GST superfamily. Pi family. As to quaternary structure, homodimer. Interacts with CDK5.

The protein localises to the cytoplasm. It is found in the mitochondrion. Its subcellular location is the nucleus. The enzyme catalyses RX + glutathione = an S-substituted glutathione + a halide anion + H(+). It catalyses the reaction prostaglandin J2 + glutathione = prostaglandin J2-S-(R)-glutathione. It carries out the reaction prostaglandin J2 + glutathione = prostaglandin J2-S-(S)-glutathione. The catalysed reaction is prostaglandin A2 + glutathione = prostaglandin A2-S-(S)-glutathione. The enzyme catalyses 11(S)-hydroxy-14(S),15(S)-epoxy-(5Z,8Z,12E)-eicosatrienoate + glutathione = (11S,15S)-dihydroxy-14(R)-S-glutathionyl-(5Z,8Z,12E)-eicosatrienoate. Its function is as follows. Conjugation of reduced glutathione to a wide number of exogenous and endogenous hydrophobic electrophiles. Involved in the formation of glutathione conjugates of both prostaglandin A2 (PGA2) and prostaglandin J2 (PGJ2). Participates in the formation of novel hepoxilin regioisomers. Negatively regulates CDK5 activity via p25/p35 translocation to prevent neurodegeneration. This Sus scrofa (Pig) protein is Glutathione S-transferase P (GSTP1).